The following is a 377-amino-acid chain: Homoserine O-acetyltransferase (377 aa).

An AB hydrolase-1 domain is found at Asn-48–Glu-347. Ser-143 (nucleophile) is an active-site residue. Arg-213 lines the substrate pocket. Active-site residues include Asp-311 and His-341. Asp-342 contacts substrate.

Belongs to the AB hydrolase superfamily. MetX family. Homodimer.

The protein resides in the cytoplasm. The catalysed reaction is L-homoserine + acetyl-CoA = O-acetyl-L-homoserine + CoA. The protein operates within amino-acid biosynthesis; L-methionine biosynthesis via de novo pathway; O-acetyl-L-homoserine from L-homoserine: step 1/1. Functionally, transfers an acetyl group from acetyl-CoA to L-homoserine, forming acetyl-L-homoserine. This chain is Homoserine O-acetyltransferase, found in Corynebacterium glutamicum (strain ATCC 13032 / DSM 20300 / JCM 1318 / BCRC 11384 / CCUG 27702 / LMG 3730 / NBRC 12168 / NCIMB 10025 / NRRL B-2784 / 534).